We begin with the raw amino-acid sequence, 525 residues long: Vanin-like protein 2 (525 aa).

The first 27 residues, 1 to 27 (MAKNYWGFFLFCLALGLMLNLSQQASL), serve as a signal peptide directing secretion. N-linked (GlcNAc...) asparagine glycans are attached at residues Asn-20 and Asn-61. Residues 33–303 (YTAGVVEFEP…RSIYVARVPK (271 aa)) form the CN hydrolase domain. Residue Glu-72 is the Proton acceptor of the active site. N-linked (GlcNAc...) asparagine glycosylation is found at Asn-99, Asn-116, and Asn-124. The active-site Proton donor is Lys-167. Asn-176 is a glycosylation site (N-linked (GlcNAc...) asparagine). Residue Cys-199 is the Nucleophile of the active site. Asn-333, Asn-348, and Asn-375 each carry an N-linked (GlcNAc...) asparagine glycan.

Belongs to the carbon-nitrogen hydrolase superfamily. BTD/VNN family. As to expression, expressed in third instar larvae.

The protein resides in the secreted. This Drosophila melanogaster (Fruit fly) protein is Vanin-like protein 2.